Consider the following 130-residue polypeptide: Small ribosomal subunit protein uS9 (130 aa).

Residues 105-130 (TRDSRMVERKKPGLKKARRASQFSKR) are disordered. Positions 106 to 115 (RDSRMVERKK) are enriched in basic and acidic residues. Residues 116-130 (PGLKKARRASQFSKR) show a composition bias toward basic residues.

Belongs to the universal ribosomal protein uS9 family.

The sequence is that of Small ribosomal subunit protein uS9 from Oenococcus oeni (strain ATCC BAA-331 / PSU-1).